Here is a 388-residue protein sequence, read N- to C-terminus: Flap endonuclease 1 (388 aa).

The N-domain stretch occupies residues 1-104; sequence MGILGLSKLI…GELAKRAERR (104 aa). Residue Asp-34 participates in Mg(2+) binding. Positions 47 and 70 each coordinate DNA. Mg(2+)-binding residues include Asp-86, Glu-158, Glu-160, Asp-179, and Asp-181. The segment at 122 to 253 is I-domain; sequence EIEKFNRRLV…KRAIELINNY (132 aa). Glu-158 serves as a coordination point for DNA. Residues Gly-231 and Asp-233 each contribute to the DNA site. A Mg(2+)-binding site is contributed by Asp-233. Positions 336–344 are interaction with PCNA; that stretch reads TQVRLDSFF. A disordered region spans residues 343–388; the sequence is FFKTLPSTPSATNAAKRKAEEAKKSANNKKAKTSGGGGGGRGRRPK.

This sequence belongs to the XPG/RAD2 endonuclease family. FEN1 subfamily. Interacts with PCNA. Three molecules of FEN1 bind to one PCNA trimer with each molecule binding to one PCNA monomer. PCNA stimulates the nuclease activity without altering cleavage specificity. Mg(2+) serves as cofactor. Post-translationally, phosphorylated. Phosphorylation upon DNA damage induces relocalization to the nuclear plasma.

The protein resides in the nucleus. Its subcellular location is the nucleolus. It is found in the nucleoplasm. The protein localises to the mitochondrion. Structure-specific nuclease with 5'-flap endonuclease and 5'-3' exonuclease activities involved in DNA replication and repair. During DNA replication, cleaves the 5'-overhanging flap structure that is generated by displacement synthesis when DNA polymerase encounters the 5'-end of a downstream Okazaki fragment. It enters the flap from the 5'-end and then tracks to cleave the flap base, leaving a nick for ligation. Also involved in the long patch base excision repair (LP-BER) pathway, by cleaving within the apurinic/apyrimidinic (AP) site-terminated flap. Acts as a genome stabilization factor that prevents flaps from equilibrating into structures that lead to duplications and deletions. Also possesses 5'-3' exonuclease activity on nicked or gapped double-stranded DNA, and exhibits RNase H activity. Also involved in replication and repair of rDNA and in repairing mitochondrial DNA. In Drosophila ananassae (Fruit fly), this protein is Flap endonuclease 1.